Reading from the N-terminus, the 260-residue chain is Salicylic acid-binding protein 2 (260 aa).

Ala-13, Ser-81, and Lys-159 together coordinate salicylate. Ser-81 functions as the Acyl-ester intermediate in the catalytic mechanism. Residues Asp-210 and His-238 each act as charge relay system in the active site. The salicylate site is built by His-238, Leu-253, and His-257.

Belongs to the AB hydrolase superfamily. Methylesterase family.

The enzyme catalyses methyl salicylate + H2O = salicylate + methanol + H(+). It functions in the pathway plant hormone biosynthesis. With respect to regulation, esterase activity is down-regulated by salicylic acid (SA) or by tetraFA, a synthetic SA analog. Its function is as follows. Required to convert methyl salicylate (MeSA) to salicylic acid (SA) as part of the signal transduction pathways that activate systemic acquired resistance in systemic tissue. MeSA is believed to be an inactive form that needs to be demethylated to exert a biological effect. Also able to catalyze the conversion of acibenzolar-S-methyl into acibenzolar to induce systemic acquired resistance. This Nicotiana tabacum (Common tobacco) protein is Salicylic acid-binding protein 2.